The chain runs to 433 residues: Histone deacetylase RPD3 (433 aa).

The segment at 19 to 331 (RRVAYFYDAD…WCFETGLLNN (313 aa)) is histone deacetylase. Histidine 151 is a catalytic residue. Residues 320–340 (RTWCFETGLLNNVVLDKDLPY) carry the ESA1-RPD3 motif motif. Residues 388–433 (SVQLNHTPRDAEDLGDVEEDSAEAKDTKGGSQYARDLHVEHDNEFY) are disordered. The residue at position 394 (threonine 394) is a Phosphothreonine. At serine 408 the chain carries Phosphoserine. The span at 422 to 433 (RDLHVEHDNEFY) shows a compositional bias: basic and acidic residues.

This sequence belongs to the histone deacetylase family. HD type 1 subfamily. Component of the RPD3C(L) complex composed of at least ASH1, CTI6, DEP1, PHO23, RPD3, RXT2, RXT3, SAP30, SDS3, SIN3, UME1 and UME6. Component of the RPD3C(S) complex composed of at least EAF3, RCO1, RPD3, SIN3, and UME1. Interacts with cyclophilins CPR1, CPR6 and CPR7, with the kinase HOG1, and with ESS1, CYC8 and HAC1.

It is found in the cytoplasm. The protein resides in the nucleus. It carries out the reaction N(6)-acetyl-L-lysyl-[histone] + H2O = L-lysyl-[histone] + acetate. Functionally, catalytic component of the RPD3 histone deacetylase (HDAC) complexes RPD3C(L) and RPD3C(S) responsible for the deacetylation of lysine residues on the N-terminal part of the core histones (H2A, H2B, H3 and H4). Histone deacetylation plays an important role in transcriptional regulation, cell cycle progression, DNA damage response, osmotic stress response and developmental events. Is involved in rDNA and telomere silencing and in double strand breaks repair. Required for both full transcription repression and activation of many genes including cell type-specific genes (STE6, TY2 and HO), cell differentiation-specific genes (SPO13), genes that respond to external signals (PHO5) and TRK2. The RPD3 complexes regulate also chromosomal replication timing. This is Histone deacetylase RPD3 (RPD3) from Saccharomyces cerevisiae (strain ATCC 204508 / S288c) (Baker's yeast).